Reading from the N-terminus, the 135-residue chain is uncharacterized protein (135 aa).

This is an uncharacterized protein from Mycoplasma pneumoniae (strain ATCC 29342 / M129 / Subtype 1) (Mycoplasmoides pneumoniae).